The sequence spans 220 residues: Elongation factor Ts, chloroplastic (220 aa).

Belongs to the EF-Ts family.

It is found in the plastid. It localises to the chloroplast. Associates with the EF-Tu.GDP complex and induces the exchange of GDP to GTP. It remains bound to the aminoacyl-tRNA.EF-Tu.GTP complex up to the GTP hydrolysis stage on the ribosome. The polypeptide is Elongation factor Ts, chloroplastic (tsf) (Porphyra purpurea (Red seaweed)).